A 303-amino-acid chain; its full sequence is Ribosomal RNA small subunit methyltransferase A (303 aa).

Residues Asn37, Val39, Gly64, Glu85, Asp115, and Asn138 each contribute to the S-adenosyl-L-methionine site.

Belongs to the class I-like SAM-binding methyltransferase superfamily. rRNA adenine N(6)-methyltransferase family. RsmA subfamily.

The protein resides in the cytoplasm. The catalysed reaction is adenosine(1518)/adenosine(1519) in 16S rRNA + 4 S-adenosyl-L-methionine = N(6)-dimethyladenosine(1518)/N(6)-dimethyladenosine(1519) in 16S rRNA + 4 S-adenosyl-L-homocysteine + 4 H(+). In terms of biological role, specifically dimethylates two adjacent adenosines (A1518 and A1519) in the loop of a conserved hairpin near the 3'-end of 16S rRNA in the 30S particle. May play a critical role in biogenesis of 30S subunits. The sequence is that of Ribosomal RNA small subunit methyltransferase A from Bifidobacterium adolescentis (strain ATCC 15703 / DSM 20083 / NCTC 11814 / E194a).